Here is a 334-residue protein sequence, read N- to C-terminus: Endochitinase 3 (334 aa).

The signal sequence occupies residues 1-23 (MRLLEFTALSSLLVLFLLLAVSA). In terms of domain architecture, Chitin-binding type-1 spans 24-65 (EQCGKQAGGARCPSGMCCSNFGWCGNTQDYCGPGKCQSQCPS). Disulfide bonds link Cys-26–Cys-41, Cys-35–Cys-47, Cys-40–Cys-54, and Cys-59–Cys-63. The disordered stretch occupies residues 64 to 84 (PSGPGPTPRPPTPTPGPSTGD). Positions 66 to 79 (GPGPTPRPPTPTPG) are enriched in pro residues. 3 positions are modified to 4-hydroxyproline: Pro-73, Pro-74, and Pro-76. Cystine bridges form between Cys-106-Cys-168, Cys-180-Cys-188, and Cys-287-Cys-319. Glu-150 acts as the Proton donor in catalysis. A propeptide spans 328–334 (GLLLETM) (removed in mature form).

Belongs to the glycosyl hydrolase 19 family. Chitinase class I subfamily. The 4-hydroxyproline residues are not glycosylated in this plant vacuolar protein.

It localises to the vacuole. It catalyses the reaction Random endo-hydrolysis of N-acetyl-beta-D-glucosaminide (1-&gt;4)-beta-linkages in chitin and chitodextrins.. Its function is as follows. Defense against chitin-containing fungal pathogens. The protein is Endochitinase 3 (CHN14) of Nicotiana tabacum (Common tobacco).